A 497-amino-acid chain; its full sequence is Vacuolar fusion protein CCZ1 homolog B (497 aa).

Residues 244–284 form a disordered region; sequence GTSSWSYLRKGSGSPQISSRSTTVPPLGSGGTLPSGNGSST.

This sequence belongs to the CCZ1 family. As to quaternary structure, interacts with MON1.

Its subcellular location is the endosome. The protein resides in the prevacuolar compartment. Its function is as follows. Plays an important role in membrane trafficking through the secretory apparatus. In complex with MON1, acts as a guanine exchange factor (GEF) for RABG3F of the RAB7 protein family. Promotes the exchange of GDP to GTP, converting RABG3F from an inactive GDP-bound form into an active GTP-bound form. The RABG3F active form is involved in protein trafficking from prevacuolar compartments (PVCs) to vacuoles. May serve as a linker between Rab5 and Rab7 protein families in PVCs and mediate PVC maturation. This is Vacuolar fusion protein CCZ1 homolog B from Arabidopsis thaliana (Mouse-ear cress).